Reading from the N-terminus, the 402-residue chain is MQYDHILVRYGELTLKSGNRNTFINQLKSNIKYALIPLTGYKVNANRDRMYVEITEDADAEEIMKRISKVFGVHSVSPVVKVEKNIDQIKSSAVKLARDIDAPGVTFKVDAKRSDKGFPYDTFALQQELGGEILSNIEHLTVDVKNPDYKLLVEIRSDAAYLYSRVIKGAGGLPVGTGGKTLLMLSGGIDSPVAGIEVMKRGVTIEAIHFHSPPFTSEEAKQKVIDLTRIMAETTGEIKLHLVPFTDIQKMIHKKVPENLTMTSTRRMMLKIADRFARQIDAKALVNGENLGQVASQTLGSMYAINAVTNLPILRPLLTLDKDEIIIKAKEIGTFDTSIQPFEDCCTIFTPKNPKTNPRLDKVESFEAGTDFDAMIEEAVANIETLTISKHTNTKKEFEDLL.

The THUMP domain maps to 61-166; it reads EEIMKRISKV…SDAAYLYSRV (106 aa). ATP is bound by residues 184 to 185, 209 to 210, arginine 266, glycine 288, and glutamine 297; these read ML and HF.

Belongs to the ThiI family.

The protein resides in the cytoplasm. It carries out the reaction [ThiI sulfur-carrier protein]-S-sulfanyl-L-cysteine + a uridine in tRNA + 2 reduced [2Fe-2S]-[ferredoxin] + ATP + H(+) = [ThiI sulfur-carrier protein]-L-cysteine + a 4-thiouridine in tRNA + 2 oxidized [2Fe-2S]-[ferredoxin] + AMP + diphosphate. The catalysed reaction is [ThiS sulfur-carrier protein]-C-terminal Gly-Gly-AMP + S-sulfanyl-L-cysteinyl-[cysteine desulfurase] + AH2 = [ThiS sulfur-carrier protein]-C-terminal-Gly-aminoethanethioate + L-cysteinyl-[cysteine desulfurase] + A + AMP + 2 H(+). Its pathway is cofactor biosynthesis; thiamine diphosphate biosynthesis. Functionally, catalyzes the ATP-dependent transfer of a sulfur to tRNA to produce 4-thiouridine in position 8 of tRNAs, which functions as a near-UV photosensor. Also catalyzes the transfer of sulfur to the sulfur carrier protein ThiS, forming ThiS-thiocarboxylate. This is a step in the synthesis of thiazole, in the thiamine biosynthesis pathway. The sulfur is donated as persulfide by IscS. This is Probable tRNA sulfurtransferase from Macrococcus caseolyticus (strain JCSC5402) (Macrococcoides caseolyticum).